A 176-amino-acid polypeptide reads, in one-letter code: MLDREGYRPNVGIILVNTRNEVFWGKRIREHSWQFPQGGIKHGESPEQAMFRELFEEVGLRPEHVKILGRTRGWLRYDVPKHWIKREWRNTYRGQKQIWFLLRLVGRDSDVCLRASTHPEFDAWRWSDYWVPLEAVIEFKRQVYQQALFELSKTLFRTRPCDPPEAYKALAEVREP.

The 144-residue stretch at 6–149 (GYRPNVGIIL…KRQVYQQALF (144 aa)) folds into the Nudix hydrolase domain. Positions 38-59 (GGIKHGESPEQAMFRELFEEVG) match the Nudix box motif.

Belongs to the Nudix hydrolase family. RppH subfamily. The cofactor is a divalent metal cation.

In terms of biological role, accelerates the degradation of transcripts by removing pyrophosphate from the 5'-end of triphosphorylated RNA, leading to a more labile monophosphorylated state that can stimulate subsequent ribonuclease cleavage. This is RNA pyrophosphohydrolase from Aromatoleum aromaticum (strain DSM 19018 / LMG 30748 / EbN1) (Azoarcus sp. (strain EbN1)).